The chain runs to 114 residues: Iron-sulfur cluster insertion protein ErpA (114 aa).

3 residues coordinate iron-sulfur cluster: Cys42, Cys106, and Cys108.

Belongs to the HesB/IscA family. As to quaternary structure, homodimer. Requires iron-sulfur cluster as cofactor.

Functionally, required for insertion of 4Fe-4S clusters for at least IspG. This Edwardsiella ictaluri (strain 93-146) protein is Iron-sulfur cluster insertion protein ErpA.